The chain runs to 258 residues: Hydroxyacylglutathione hydrolase (258 aa).

Residues His-56, His-58, Asp-60, His-61, His-112, Asp-132, and His-170 each coordinate Zn(2+).

Belongs to the metallo-beta-lactamase superfamily. Glyoxalase II family. In terms of assembly, monomer. It depends on Zn(2+) as a cofactor.

It carries out the reaction an S-(2-hydroxyacyl)glutathione + H2O = a 2-hydroxy carboxylate + glutathione + H(+). The protein operates within secondary metabolite metabolism; methylglyoxal degradation; (R)-lactate from methylglyoxal: step 2/2. Thiolesterase that catalyzes the hydrolysis of S-D-lactoyl-glutathione to form glutathione and D-lactic acid. In Pseudomonas paraeruginosa (strain DSM 24068 / PA7) (Pseudomonas aeruginosa (strain PA7)), this protein is Hydroxyacylglutathione hydrolase.